The sequence spans 418 residues: Gamma-glutamyl phosphate reductase (418 aa).

It belongs to the gamma-glutamyl phosphate reductase family.

The protein resides in the cytoplasm. The catalysed reaction is L-glutamate 5-semialdehyde + phosphate + NADP(+) = L-glutamyl 5-phosphate + NADPH + H(+). The protein operates within amino-acid biosynthesis; L-proline biosynthesis; L-glutamate 5-semialdehyde from L-glutamate: step 2/2. Its function is as follows. Catalyzes the NADPH-dependent reduction of L-glutamate 5-phosphate into L-glutamate 5-semialdehyde and phosphate. The product spontaneously undergoes cyclization to form 1-pyrroline-5-carboxylate. The polypeptide is Gamma-glutamyl phosphate reductase (Chlorobium chlorochromatii (strain CaD3)).